The following is a 367-amino-acid chain: tRNA 2-selenouridine synthase (367 aa).

Residues Phe-15–Glu-138 form the Rhodanese domain. The S-selanylcysteine intermediate role is filled by Cys-98.

The protein belongs to the SelU family. Monomer.

The enzyme catalyses 5-methylaminomethyl-2-thiouridine(34) in tRNA + selenophosphate + (2E)-geranyl diphosphate + H2O + H(+) = 5-methylaminomethyl-2-selenouridine(34) in tRNA + (2E)-thiogeraniol + phosphate + diphosphate. It catalyses the reaction 5-methylaminomethyl-2-thiouridine(34) in tRNA + (2E)-geranyl diphosphate = 5-methylaminomethyl-S-(2E)-geranyl-thiouridine(34) in tRNA + diphosphate. It carries out the reaction 5-methylaminomethyl-S-(2E)-geranyl-thiouridine(34) in tRNA + selenophosphate + H(+) = 5-methylaminomethyl-2-(Se-phospho)selenouridine(34) in tRNA + (2E)-thiogeraniol. The catalysed reaction is 5-methylaminomethyl-2-(Se-phospho)selenouridine(34) in tRNA + H2O = 5-methylaminomethyl-2-selenouridine(34) in tRNA + phosphate. In terms of biological role, involved in the post-transcriptional modification of the uridine at the wobble position (U34) of tRNA(Lys), tRNA(Glu) and tRNA(Gln). Catalyzes the conversion of 2-thiouridine (S2U-RNA) to 2-selenouridine (Se2U-RNA). Acts in a two-step process involving geranylation of 2-thiouridine (S2U) to S-geranyl-2-thiouridine (geS2U) and subsequent selenation of the latter derivative to 2-selenouridine (Se2U) in the tRNA chain. The protein is tRNA 2-selenouridine synthase of Shewanella denitrificans (strain OS217 / ATCC BAA-1090 / DSM 15013).